Consider the following 435-residue polypeptide: Oxaloacetate decarboxylase beta chain (435 aa).

9 consecutive transmembrane segments (helical) span residues 13–35 (IMHI…WLAI), 42–64 (LLLL…LAMT), 123–145 (ILAL…FMGV), 165–187 (AAAQ…LGII), 215–237 (LAPE…VPLI), 267–289 (IVFP…PLLG), 309–328 (TAQN…SVGA), 340–362 (TLGI…VIMA), and 404–426 (FLLM…AAGI).

This sequence belongs to the GcdB/MmdB/OadB family. In terms of assembly, heterotrimer of an alpha, a beta and a gamma subunit. Requires Na(+) as cofactor.

The protein localises to the cell membrane. It carries out the reaction oxaloacetate + 2 Na(+)(in) + H(+) = pyruvate + 2 Na(+)(out) + CO2. Functionally, catalyzes the decarboxylation of oxaloacetate coupled to Na(+) translocation. The polypeptide is Oxaloacetate decarboxylase beta chain (oadB) (Haemophilus ducreyi (strain 35000HP / ATCC 700724)).